We begin with the raw amino-acid sequence, 245 residues long: MAEIHTPYSSLKKLLSLLNGFVAVSGIILVGLGIGGKCGGASLTNVLGLSSAYLLHVGNLCLVMGCITVLLGCAGWYGATKESRGTLLFCILSMVIVLIMEVTAATVVLLFFPIVGDVALEHTFVTLRKNYRGYNEPDDYSTQWNLVMEKLKCCGVNNYTDFSGSSFEMTTGHTYPRSCCKSIGSVSCDGRDVSPNVIHQKGCFHKLLKITKTQSFTLSGSSLGAAVIQRWGSRYVAQAGLELLA.

Residues 1 to 13 are Cytoplasmic-facing; sequence MAEIHTPYSSLKK. A helical membrane pass occupies residues 14-34; that stretch reads LLSLLNGFVAVSGIILVGLGI. Residues 35–37 lie on the Extracellular side of the membrane; sequence GGK. The helical transmembrane segment at 38–58 threads the bilayer; sequence CGGASLTNVLGLSSAYLLHVG. Residue Asn59 is a topological domain, cytoplasmic. A helical transmembrane segment spans residues 60–80; it reads LCLVMGCITVLLGCAGWYGAT. At 81 to 94 the chain is on the extracellular side; the sequence is KESRGTLLFCILSM. A helical transmembrane segment spans residues 95 to 115; that stretch reads VIVLIMEVTAATVVLLFFPIV. Residues 116-245 lie on the Cytoplasmic side of the membrane; the sequence is GDVALEHTFV…VAQAGLELLA (130 aa).

The protein belongs to the tetraspanin (TM4SF) family. Broadly expressed in most human tissues and cell lines including neural and bone marrow derived tissues.

The protein localises to the membrane. This chain is Tetraspanin-16 (TSPAN16), found in Homo sapiens (Human).